We begin with the raw amino-acid sequence, 46 residues long: Transcriptional regulator SEHBP (46 aa).

In terms of assembly, interacts with histone H2B. Also interacts with chromatin-binding proteins HMGN1 and HMGN3.

The protein resides in the nucleus. It localises to the cytoplasm. Functionally, plays a role in transcription regulation. The sequence is that of Transcriptional regulator SEHBP from Homo sapiens (Human).